We begin with the raw amino-acid sequence, 89 residues long: Small ribosomal subunit protein uS14 (89 aa).

It belongs to the universal ribosomal protein uS14 family. As to quaternary structure, part of the 30S ribosomal subunit. Contacts proteins S3 and S10.

Its function is as follows. Binds 16S rRNA, required for the assembly of 30S particles and may also be responsible for determining the conformation of the 16S rRNA at the A site. This is Small ribosomal subunit protein uS14 from Phytoplasma australiense.